The chain runs to 36 residues: Mu/kappa-theraphotoxin-Ap1a (36 aa).

3 disulfides stabilise this stretch: C3/C18, C10/C23, and C17/C30. A Phenylalanine amide modification is found at F36.

This sequence belongs to the neurotoxin 10 (Hwtx-1) family. In terms of tissue distribution, expressed by the venom gland.

The protein resides in the secreted. Functionally, inhibitor of voltage-gated potassium and sodium channels. Among other potassium channels, it selectively inhibits Kv10.1/KCNH1/EAG1 (IC(50)=236 nM) by shifting the voltage dependence of channel activation in a depolarising direction, it shows a maximum inhibition of 80% at saturating concentrations, it shows fast on-rates, and is poorly reversible. It also slightly affects channel inactivation, when the membrane is highly depolarised (&gt;+80 mV). It shows similar potency on Nav1.7/SCN9A (IC(50)=222 nM) and lower potency on Nav1.2/SCN2A (IC(50)=519 nM). The sequence is that of Mu/kappa-theraphotoxin-Ap1a from Avicularia purpurea (Ecuadorian purple pinktoe tarantula).